A 278-amino-acid chain; its full sequence is Diaminopimelate epimerase (278 aa).

Positions 13, 49, and 68 each coordinate substrate. The Proton donor role is filled by C77. Residues 78-79 (GN), N161, N194, and 212-213 (ER) each bind substrate. Catalysis depends on C221, which acts as the Proton acceptor. Residue 222–223 (GT) participates in substrate binding.

It belongs to the diaminopimelate epimerase family. In terms of assembly, homodimer.

It localises to the cytoplasm. The enzyme catalyses (2S,6S)-2,6-diaminopimelate = meso-2,6-diaminopimelate. It functions in the pathway amino-acid biosynthesis; L-lysine biosynthesis via DAP pathway; DL-2,6-diaminopimelate from LL-2,6-diaminopimelate: step 1/1. Functionally, catalyzes the stereoinversion of LL-2,6-diaminopimelate (L,L-DAP) to meso-diaminopimelate (meso-DAP), a precursor of L-lysine and an essential component of the bacterial peptidoglycan. The chain is Diaminopimelate epimerase from Nitrosomonas eutropha (strain DSM 101675 / C91 / Nm57).